Consider the following 205-residue polypeptide: Latherin (205 aa).

Cysteine 133 and cysteine 176 are oxidised to a cystine.

The protein belongs to the BPI/LBP/Plunc superfamily. Plunc family. In terms of assembly, monomer.

The protein localises to the secreted. Functionally, major protein in sweat, has surfactant properties. The protein is Latherin (LATH) of Equus quagga burchellii (Burchell's zebra).